A 214-amino-acid polypeptide reads, in one-letter code: Dephospho-CoA kinase (214 aa).

In terms of domain architecture, DPCK spans 3-202; it reads KIGLTGGIGS…DRWLALAGAA (200 aa). 11-16 serves as a coordination point for ATP; the sequence is GSGKSR.

Belongs to the CoaE family.

It is found in the cytoplasm. The enzyme catalyses 3'-dephospho-CoA + ATP = ADP + CoA + H(+). Its pathway is cofactor biosynthesis; coenzyme A biosynthesis; CoA from (R)-pantothenate: step 5/5. Its function is as follows. Catalyzes the phosphorylation of the 3'-hydroxyl group of dephosphocoenzyme A to form coenzyme A. The protein is Dephospho-CoA kinase of Bordetella bronchiseptica (strain ATCC BAA-588 / NCTC 13252 / RB50) (Alcaligenes bronchisepticus).